Reading from the N-terminus, the 284-residue chain is Type II methyltransferase M1.LlaDCHI (284 aa).

S-adenosyl-L-methionine is bound by residues W17, K21, D62, and D194.

Belongs to the N(4)/N(6)-methyltransferase family.

The catalysed reaction is a 2'-deoxyadenosine in DNA + S-adenosyl-L-methionine = an N(6)-methyl-2'-deoxyadenosine in DNA + S-adenosyl-L-homocysteine + H(+). In terms of biological role, an alpha subtype methylase, recognizes the double-stranded sequence 5'-GATC-3', methylates A-2 on both strands, and protects the DNA from cleavage by the LlaDCHI endonuclease. The sequence is that of Type II methyltransferase M1.LlaDCHI from Lactococcus lactis subsp. cremoris (Streptococcus cremoris).